The chain runs to 99 residues: Beta-defensin 127 (99 aa).

Positions 1–20 are cleaved as a signal peptide; that stretch reads MGLFMIIAILLFQKPTVTEQ. Cystine bridges form between C24–C53, C33–C47, and C37–C54. Positions 66 to 99 are excised as a propeptide; it reads ITKPSHPKPATLALTLQDYVTIIENFPSLKTQST.

The protein belongs to the beta-defensin family.

It localises to the secreted. Functionally, has antibacterial activity. This is Beta-defensin 127 (DEFB127) from Pan troglodytes (Chimpanzee).